Consider the following 303-residue polypeptide: Mitochondrial substrate carrier family protein E (303 aa).

The Mitochondrial intermembrane segment spans residues 1 to 8 (MENKKESS). Solcar repeat units follow at residues 6 to 93 (ESSL…SKQW), 104 to 197 (ESTI…CKST), and 210 to 298 (LPIP…LKYL). The helical transmembrane segment at 9 to 29 (LLYILTGATSGLLADSIMHPV) threads the bilayer. The Mitochondrial matrix portion of the chain corresponds to 30–67 (DTVRARVQIEKVGKSQYKGTFNALNQIIKNEGVSYLYK). Residues 68–88 (GFPIVATATVPAHALYFLGYE) form a helical membrane-spanning segment. The Mitochondrial intermembrane portion of the chain corresponds to 89–109 (YSKQWVTDRYGKKWGESTITH). A helical membrane pass occupies residues 110 to 130 (FSAGFVADALGSLIWVPMDII). The Mitochondrial matrix portion of the chain corresponds to 131 to 171 (KQRLQVQTNTQKLNPNQTYYKGSFHAGKIILQEEGIRGLYR). The helical transmembrane segment at 172–192 (GFMPALATYGPFVGIYFSVYE) threads the bilayer. The Mitochondrial intermembrane portion of the chain corresponds to 193–215 (KCKSTISSLLSKEKDQYLPIPYQ). Residues 216 to 236 (LGSGFFAGAFAAAVTCPLDVI) traverse the membrane as a helical segment. Topologically, residues 237–268 (KTRIQVQRSTEKQIYKGMWDSFKTILKEEGPK) are mitochondrial matrix. The chain crosses the membrane as a helical span at residues 269-289 (AFVKGMGARIWWIAPGNALTI). At 290-303 (ASYEQLKYLFKDLI) the chain is on the mitochondrial intermembrane side.

Belongs to the mitochondrial carrier (TC 2.A.29) family.

It localises to the mitochondrion inner membrane. Its function is as follows. Mitochondrial solute carriers shuttle metabolites, nucleotides, and cofactors through the mitochondrial inner membrane. The polypeptide is Mitochondrial substrate carrier family protein E (mcfE) (Dictyostelium discoideum (Social amoeba)).